The following is a 364-amino-acid chain: tRNA 2-selenouridine synthase (364 aa).

Positions 14-137 (LLADTPLIDV…LRQTAIQATW (124 aa)) constitute a Rhodanese domain. The S-selanylcysteine intermediate role is filled by C97.

The protein belongs to the SelU family. Monomer.

It catalyses the reaction 5-methylaminomethyl-2-thiouridine(34) in tRNA + selenophosphate + (2E)-geranyl diphosphate + H2O + H(+) = 5-methylaminomethyl-2-selenouridine(34) in tRNA + (2E)-thiogeraniol + phosphate + diphosphate. It carries out the reaction 5-methylaminomethyl-2-thiouridine(34) in tRNA + (2E)-geranyl diphosphate = 5-methylaminomethyl-S-(2E)-geranyl-thiouridine(34) in tRNA + diphosphate. The enzyme catalyses 5-methylaminomethyl-S-(2E)-geranyl-thiouridine(34) in tRNA + selenophosphate + H(+) = 5-methylaminomethyl-2-(Se-phospho)selenouridine(34) in tRNA + (2E)-thiogeraniol. The catalysed reaction is 5-methylaminomethyl-2-(Se-phospho)selenouridine(34) in tRNA + H2O = 5-methylaminomethyl-2-selenouridine(34) in tRNA + phosphate. In terms of biological role, involved in the post-transcriptional modification of the uridine at the wobble position (U34) of tRNA(Lys), tRNA(Glu) and tRNA(Gln). Catalyzes the conversion of 2-thiouridine (S2U-RNA) to 2-selenouridine (Se2U-RNA). Acts in a two-step process involving geranylation of 2-thiouridine (S2U) to S-geranyl-2-thiouridine (geS2U) and subsequent selenation of the latter derivative to 2-selenouridine (Se2U) in the tRNA chain. This is tRNA 2-selenouridine synthase from Salmonella heidelberg (strain SL476).